The chain runs to 253 residues: Tryptophan synthase alpha chain (253 aa).

Active-site proton acceptor residues include Glu-47 and Asp-58.

This sequence belongs to the TrpA family. As to quaternary structure, tetramer of two alpha and two beta chains.

The enzyme catalyses (1S,2R)-1-C-(indol-3-yl)glycerol 3-phosphate + L-serine = D-glyceraldehyde 3-phosphate + L-tryptophan + H2O. The protein operates within amino-acid biosynthesis; L-tryptophan biosynthesis; L-tryptophan from chorismate: step 5/5. The alpha subunit is responsible for the aldol cleavage of indoleglycerol phosphate to indole and glyceraldehyde 3-phosphate. This Desulforapulum autotrophicum (strain ATCC 43914 / DSM 3382 / VKM B-1955 / HRM2) (Desulfobacterium autotrophicum) protein is Tryptophan synthase alpha chain.